Here is a 455-residue protein sequence, read N- to C-terminus: Alpha-1,3/1,6-mannosyltransferase ALG2 (455 aa).

The helical transmembrane segment at Phe-73–Trp-95 threads the bilayer. Asn-138 carries an N-linked (GlcNAc...) asparagine glycan. A helical transmembrane segment spans residues Gly-434–Ile-453.

Belongs to the glycosyltransferase group 1 family. Glycosyltransferase 4 subfamily.

Its subcellular location is the endoplasmic reticulum membrane. It catalyses the reaction a beta-D-Man-(1-&gt;4)-beta-D-GlcNAc-(1-&gt;4)-alpha-D-GlcNAc-diphospho-di-trans,poly-cis-dolichol + GDP-alpha-D-mannose = an alpha-D-Man-(1-&gt;3)-beta-D-Man-(1-&gt;4)-beta-D-GlcNAc-(1-&gt;4)-alpha-D-GlcNAc-diphospho-di-trans,poly-cis-dolichol + GDP + H(+). It carries out the reaction an alpha-D-Man-(1-&gt;3)-beta-D-Man-(1-&gt;4)-beta-D-GlcNAc-(1-&gt;4)-alpha-D-GlcNAc-diphospho-di-trans,poly-cis-dolichol + GDP-alpha-D-mannose = an alpha-D-Man-(1-&gt;3)-[alpha-D-Man-(1-&gt;6)]-beta-D-Man-(1-&gt;4)-beta-D-GlcNAc-(1-&gt;4)-alpha-D-GlcNAc-diphospho-di-trans,poly-cis-dolichol + GDP + H(+). It functions in the pathway protein modification; protein glycosylation. Mannosylates Man(2)GlcNAc(2)-dolichol diphosphate and Man(1)GlcNAc(2)-dolichol diphosphate to form Man(3)GlcNAc(2)-dolichol diphosphate. This chain is Alpha-1,3/1,6-mannosyltransferase ALG2 (ALG2), found in Rhizomucor pusillus.